The following is a 177-amino-acid chain: Large ribosomal subunit protein uL6 (177 aa).

This sequence belongs to the universal ribosomal protein uL6 family. Part of the 50S ribosomal subunit.

In terms of biological role, this protein binds to the 23S rRNA, and is important in its secondary structure. It is located near the subunit interface in the base of the L7/L12 stalk, and near the tRNA binding site of the peptidyltransferase center. The protein is Large ribosomal subunit protein uL6 of Allorhizobium ampelinum (strain ATCC BAA-846 / DSM 112012 / S4) (Agrobacterium vitis (strain S4)).